A 404-amino-acid polypeptide reads, in one-letter code: Glutamate-pyruvate aminotransferase AlaA (404 aa).

2 residues coordinate L-alanine: G41 and N179. K240 bears the N6-(pyridoxal phosphate)lysine mark. Residue R378 participates in L-alanine binding.

The protein belongs to the class-I pyridoxal-phosphate-dependent aminotransferase family. As to quaternary structure, homodimer. Pyridoxal 5'-phosphate is required as a cofactor.

It carries out the reaction L-alanine + 2-oxoglutarate = pyruvate + L-glutamate. The protein operates within amino-acid biosynthesis; L-alanine biosynthesis. In terms of biological role, involved in the biosynthesis of alanine. Catalyzes the transamination of pyruvate by glutamate, leading to the formation of L-alanine and 2-oxoglutarate. Is also able to catalyze the reverse reaction. The protein is Glutamate-pyruvate aminotransferase AlaA (alaA) of Haemophilus influenzae (strain ATCC 51907 / DSM 11121 / KW20 / Rd).